The primary structure comprises 298 residues: 1,2-dihydroxynaphthalene dioxygenase (298 aa).

VOC domains are found at residues 6–121 and 146–267; these read ELGY…IFYG and GIGH…FGWG. His149 provides a ligand contact to Fe cation. Residues His149, 196-197, His212, and Tyr253 contribute to the substrate site; that span reads QH. Residue His212 participates in Fe cation binding. Position 263 (Glu263) interacts with Fe cation.

The protein belongs to the extradiol ring-cleavage dioxygenase family. Homooctamer. Fe(2+) serves as cofactor.

The enzyme catalyses naphthalene-1,2-diol + O2 = 2-hydroxychromene-2-carboxylate + H(+). It participates in aromatic compound metabolism; naphthalene degradation. Involved in the naphthalene and naphthalenesulfonate catabolic pathway. Catalyzes the meta-cleavage of 1,2-dihydroxynaphthalene (1,2-DHN) to yield 2-hydroxychromene-2-carboxylic acid. Can also cleave 1,2,5-trihydroxynaphthalene (1,2,5-THN), 1,2,6-trihydroxynaphthalene (1,2,6-THN), 1,2,7-trihydroxynaphthalene (1,2,7-THN), 2,3-dihydroxybiphenyl, 3,4-dihydroxybiphenyl, catechol, 3-methylcatechol and 4-methylcatechol. This Sphingobium xenophagum protein is 1,2-dihydroxynaphthalene dioxygenase (nsaC).